Here is a 1142-residue protein sequence, read N- to C-terminus: Enamelin (1142 aa).

Residues 1-39 (MLVLRCRLGTSFPKLDNLVPKGKMKILLVFLGLLGNSVA) form the signal peptide. Disordered regions lie at residues 88–193 (QYQM…ISNE), 214–326 (YYSE…PNIR), 398–671 (PANL…QNRW), 874–955 (CCAG…LRRN), 1020–1048 (VIGTPDEGSNPEGIQSQVQENESERQQQR), and 1062–1092 (LAKHHSSTTGTPSSDGRQSPFDGDSITPTEN). Residues 103–114 (HPRKSSAPKRHN) are compositionally biased toward basic residues. Asn-114 and Asn-126 each carry an N-linked (GlcNAc...) asparagine glycan. The segment covering 117–128 (DQTQETQKPNQT) has biased composition (polar residues). The span at 140–162 (KQPSHNQPQPEEEAQPPQAFPPF) shows a compositional bias: low complexity. Positions 170–186 (QQPPWQIPQRLPPPGYG) are enriched in pro residues. Ser-191 and Ser-216 each carry phosphoserine. Over residues 223-234 (DFEKPKEEDPPK) the composition is skewed to basic and acidic residues. Polar residues predominate over residues 240-285 (TEPTANSTVTETNSTQPNPKGSQGGNDTSPTGNSTPGLNTGNNPPA). N-linked (GlcNAc...) asparagine glycosylation is found at Asn-245, Asn-252, Asn-265, and Asn-296. The span at 429-442 (RNEKIQNPKEKPLG) shows a compositional bias: basic and acidic residues. Composition is skewed to polar residues over residues 452–470 (KNPTSPWRNSQQYEVNKSN), 507–516 (SDGQTQSQNL), and 531–544 (SETNQSELKHSSYQ). The N-linked (GlcNAc...) asparagine glycan is linked to Asn-467. An N-linked (GlcNAc...) asparagine glycan is attached at Asn-534. Positions 556–588 (AKEHFPAGRNTWDHQEISPPFKEDPGRQEEHLP) are enriched in basic and acidic residues. The segment covering 652-661 (NEEDPVDPTG) has biased composition (acidic residues). Positions 924–934 (SPTSILPGQRN) are enriched in polar residues. The N-linked (GlcNAc...) asparagine glycan is linked to Asn-934. Residues 935 to 951 (SSEKRESQNPFRDDVST) are compositionally biased toward basic and acidic residues. An N-linked (GlcNAc...) asparagine glycan is attached at Asn-1040. Polar residues predominate over residues 1068–1078 (STTGTPSSDGR).

In terms of processing, phosphorylated by FAM20C in vitro. As to expression, expressed in tooth particularly in odontoblast, ameloblast and cementoblast.

It is found in the secreted. Its subcellular location is the extracellular space. It localises to the extracellular matrix. Functionally, involved in the mineralization and structural organization of enamel. Involved in the extension of enamel during the secretory stage of dental enamel formation. The protein is Enamelin (ENAM) of Homo sapiens (Human).